Here is a 471-residue protein sequence, read N- to C-terminus: MTELPDSTRWQLWIVAFGFFMQSLDTTIVNTALPSMAQSLGESPLHMHMVIVSYVLTVAVMLPASGWLADKVGVRNIFFTAIVLFTLGSLFCALSGTLNELLLARALQGVGGAMMVPVGRLTVMKIVPREQYMAAMTFVTLPGQVGPLLGPALGGLLVEYASWHWIFLINIPVGIIGAIATLLLMPNYTMQTRRFDLSGFLLLAVGMAVLTLALDGSKGTGLSPLAIAGLVAVGVVALVLYLLHARNNNRALFSLKLFRTRTFSLGLAGSFAGRIGSGMLPFMTPVFLQIGLGFSPFHAGLMMIPMVLGSMGMKRIVVQVVNRFGYRRVLVATTLGLSLITLLFMTTALLGWYYVLPFVLFLQGMVNSTRFSSMNTLTLKDLPDNLASSGNSLLSMIMQLSMSIGVTIAGLLLGLFGSQHVSVDSGTTQTVFMYTWLSMAFIIALPAFIFARVPNDTHQNVAISRRKRSAQ.

The Periplasmic portion of the chain corresponds to 1 to 11 (MTELPDSTRWQ). The helical transmembrane segment at 12-32 (LWIVAFGFFMQSLDTTIVNTA) threads the bilayer. The Cytoplasmic portion of the chain corresponds to 33–48 (LPSMAQSLGESPLHMH). The helical transmembrane segment at 49–69 (MVIVSYVLTVAVMLPASGWLA) threads the bilayer. The Periplasmic segment spans residues 70-76 (DKVGVRN). The helical transmembrane segment at 77 to 97 (IFFTAIVLFTLGSLFCALSGT) threads the bilayer. The Cytoplasmic portion of the chain corresponds to 98–101 (LNEL). A helical membrane pass occupies residues 102 to 124 (LLARALQGVGGAMMVPVGRLTVM). The Periplasmic segment spans residues 125-137 (KIVPREQYMAAMT). The helical transmembrane segment at 138-158 (FVTLPGQVGPLLGPALGGLLV) threads the bilayer. Topologically, residues 159 to 164 (EYASWH) are cytoplasmic. The chain crosses the membrane as a helical span at residues 165 to 185 (WIFLINIPVGIIGAIATLLLM). Residues 186 to 196 (PNYTMQTRRFD) lie on the Periplasmic side of the membrane. A helical transmembrane segment spans residues 197-217 (LSGFLLLAVGMAVLTLALDGS). Over 218-224 (KGTGLSP) the chain is Cytoplasmic. The chain crosses the membrane as a helical span at residues 225–245 (LAIAGLVAVGVVALVLYLLHA). Residues 246–262 (RNNNRALFSLKLFRTRT) lie on the Periplasmic side of the membrane. A helical transmembrane segment spans residues 263 to 283 (FSLGLAGSFAGRIGSGMLPFM). Residues 284-285 (TP) are Cytoplasmic-facing. A helical transmembrane segment spans residues 286 to 306 (VFLQIGLGFSPFHAGLMMIPM). Topologically, residues 307 to 341 (VLGSMGMKRIVVQVVNRFGYRRVLVATTLGLSLIT) are periplasmic. The helical transmembrane segment at 342–362 (LLFMTTALLGWYYVLPFVLFL) threads the bilayer. Residues 363–395 (QGMVNSTRFSSMNTLTLKDLPDNLASSGNSLLS) lie on the Cytoplasmic side of the membrane. The chain crosses the membrane as a helical span at residues 396-416 (MIMQLSMSIGVTIAGLLLGLF). The Periplasmic portion of the chain corresponds to 417-430 (GSQHVSVDSGTTQT). The chain crosses the membrane as a helical span at residues 431-451 (VFMYTWLSMAFIIALPAFIFA). Residues 452–471 (RVPNDTHQNVAISRRKRSAQ) lie on the Cytoplasmic side of the membrane.

Belongs to the major facilitator superfamily. TCR/Tet family.

The protein resides in the cell inner membrane. This Shigella sonnei (strain Ss046) protein is Putative multidrug resistance protein MdtD.